Reading from the N-terminus, the 507-residue chain is Probable aldehyde dehydrogenase (507 aa).

An NAD(+)-binding site is contributed by 219–225; the sequence is GFGVEAG. Active-site residues include Glu-263 and Cys-302.

This sequence belongs to the aldehyde dehydrogenase family.

It carries out the reaction an aldehyde + NAD(+) + H2O = a carboxylate + NADH + 2 H(+). In Streptomyces coelicolor (strain ATCC BAA-471 / A3(2) / M145), this protein is Probable aldehyde dehydrogenase.